A 316-amino-acid polypeptide reads, in one-letter code: Universal stress protein E (316 aa).

This sequence belongs to the universal stress protein A family.

Its subcellular location is the cytoplasm. Functionally, required for resistance to DNA-damaging agents. This Escherichia coli O157:H7 protein is Universal stress protein E (uspE).